We begin with the raw amino-acid sequence, 152 residues long: Proteolipid protein 2 (152 aa).

The N-linked (GlcNAc...) asparagine glycan is linked to Asn18. Residues 19 to 137 (FSRTRKGILL…DAYVTFPVRQ (119 aa)) form the MARVEL domain. 3 helical membrane-spanning segments follow: residues 25–45 (GILLFAEIILCLVILICFSAS), 48–68 (GYSSLSVIEMILAAIFFVVYM), and 85–105 (FFRTLIAAILYLITSIVVLVE). An N-linked (GlcNAc...) asparagine glycan is attached at Asn108. The helical transmembrane segment at 112–132 (IVAGVLGLIATCLFGYDAYVT) threads the bilayer.

Enriched in colonic mucosa. The expression of A4 follows a gradient along the crypto-villus axis with the most abundant message occurring in the lower half of the crypt.

It localises to the membrane. Its function is as follows. May play a role in cell differentiation in the intestinal epithelium. This is Proteolipid protein 2 (PLP2) from Homo sapiens (Human).